A 526-amino-acid chain; its full sequence is Chaperonin GroEL, chloroplastic (526 aa).

Residues 29–32 (TLGP), 86–90 (DGTTT), Gly-412, 476–478 (DAA), and Asp-492 contribute to the ATP site.

This sequence belongs to the chaperonin (HSP60) family. Forms a cylinder of 14 subunits composed of two heptameric rings stacked back-to-back. Interacts with the co-chaperonin GroES.

The protein localises to the plastid. The protein resides in the chloroplast. The enzyme catalyses ATP + H2O + a folded polypeptide = ADP + phosphate + an unfolded polypeptide.. Together with its co-chaperonin GroES, plays an essential role in assisting protein folding. The GroEL-GroES system forms a nano-cage that allows encapsulation of the non-native substrate proteins and provides a physical environment optimized to promote and accelerate protein folding. In Cyanidioschyzon merolae (strain NIES-3377 / 10D) (Unicellular red alga), this protein is Chaperonin GroEL, chloroplastic.